An 817-amino-acid polypeptide reads, in one-letter code: Protein hunchback (817 aa).

3 disordered regions span residues 51–77 (PGTI…HSPL), 93–132 (HNGG…TSSA), and 187–252 (YSQQ…EDQD). Residues 62–76 (QQHSSMMASQPQHSP) are compositionally biased toward low complexity. Residues 103 to 119 (FSDNSGAMTPSPNTNVG) are compositionally biased toward polar residues. The segment covering 189–201 (QQQQQQQQRQLQQ) has biased composition (low complexity). C2H2-type zinc fingers lie at residues 287–309 (HKCK…ARTH), 316–338 (LQCP…IRKH), 344–366 (FQCD…RKSH), and 372–396 (YRCA…KYEH). Disordered stretches follow at residues 456–477 (PLQQ…SSVA), 491–513 (QNLA…SSQQ), 564–619 (QLQQ…QQTP), and 666–758 (APTS…AGNS). Low complexity predominate over residues 564–576 (QLQQQQQNKQANE). Residues 577–595 (NGEEDEEDNDEVDEDEEEF) show a composition bias toward acidic residues. Over residues 680–694 (MPPTTSSPIHPSQVN) the composition is skewed to polar residues. Residues 721–758 (PTTANTSASSTASSSGNSSNSSSTSTSSNSNSSSAGNS) are compositionally biased toward low complexity. 2 C2H2-type zinc fingers span residues 764 to 786 (YECK…MGYH) and 792 to 816 (FKCN…RNAH).

It belongs to the hunchback C2H2-type zinc-finger protein family.

The protein resides in the nucleus. In terms of biological role, gap class segmentation protein that controls development of head structures. This chain is Protein hunchback (hb), found in Musca domestica (House fly).